A 606-amino-acid chain; its full sequence is Zinc metalloproteinase-disintegrin-like HF3 (606 aa).

Positions 1–20 (MIQVLLVTICLAAFPYQGSS) are cleaved as a signal peptide. A propeptide spanning residues 21–190 (IILESGNVND…KKASQLVVTA (170 aa)) is cleaved from the precursor. The 197-residue stretch at 199-395 (KYIELVILAD…YKPQCILNEP (197 aa)) folds into the Peptidase M12B domain. Residue glutamate 202 participates in Ca(2+) binding. Asparagine 259 carries N-linked (GlcNAc...) asparagine glycosylation. Ca(2+) is bound at residue aspartate 286. Intrachain disulfides connect cysteine 310/cysteine 390, cysteine 350/cysteine 374, and cysteine 352/cysteine 357. The N-linked (GlcNAc...) asparagine glycan is linked to asparagine 313. Histidine 335 serves as a coordination point for Zn(2+). Residue glutamate 336 is part of the active site. Zn(2+) contacts are provided by histidine 339 and histidine 345. The N-linked (GlcNAc...) asparagine glycan is linked to asparagine 373. Positions 390, 393, 405, 408, 410, 412, 415, and 418 each coordinate Ca(2+). Residues 403 to 489 (PPVCGNELLE…DCPTDDFKRN (87 aa)) form the Disintegrin domain. Cystine bridges form between cysteine 406–cysteine 435, cysteine 417–cysteine 430, cysteine 419–cysteine 425, cysteine 429–cysteine 452, cysteine 443–cysteine 449, cysteine 448–cysteine 474, cysteine 461–cysteine 481, cysteine 468–cysteine 500, cysteine 493–cysteine 505, cysteine 512–cysteine 562, cysteine 527–cysteine 569, cysteine 540–cysteine 550, cysteine 557–cysteine 594, and cysteine 588–cysteine 599. The D/ECD-tripeptide motif lies at 467–469 (ECD). Ca(2+) contacts are provided by aspartate 469, glutamate 472, and aspartate 484. An N-linked (GlcNAc...) asparagine glycan is attached at asparagine 519. N-linked (GlcNAc...) asparagine glycosylation is present at asparagine 584.

It belongs to the venom metalloproteinase (M12B) family. P-III subfamily. P-IIIa sub-subfamily. As to quaternary structure, monomer. Zn(2+) serves as cofactor. As to expression, expressed by the venom gland.

The protein resides in the secreted. In terms of biological role, the metalloproteinase-disintegrin-like HF3 is a potent hemorrhagic toxin that activates macrophages for phagocytosis through integrin alpha-M/beta-2 (ITGAM/ITGB2). It inhibits collagen-induced platelet aggregation. This protein shows cleavage specificity for substrate for leucine at P1' position, followed by hydrophobic residues in P2'. This Bothrops jararaca (Jararaca) protein is Zinc metalloproteinase-disintegrin-like HF3.